An 83-amino-acid chain; its full sequence is Small ribosomal subunit protein bS16 (83 aa).

This sequence belongs to the bacterial ribosomal protein bS16 family.

This Chromobacterium violaceum (strain ATCC 12472 / DSM 30191 / JCM 1249 / CCUG 213 / NBRC 12614 / NCIMB 9131 / NCTC 9757 / MK) protein is Small ribosomal subunit protein bS16.